The sequence spans 98 residues: uncharacterized protein (98 aa).

The protein belongs to the YciI family. Homodimer.

This is an uncharacterized protein from Haemophilus influenzae (strain ATCC 51907 / DSM 11121 / KW20 / Rd).